The following is a 265-amino-acid chain: Orotidine 5'-phosphate decarboxylase (265 aa).

Substrate is bound by residues Asp-38, Lys-60–His-62, Asp-91–Thr-100, Tyr-213, and Arg-232. Lys-93 serves as the catalytic Proton donor.

The protein belongs to the OMP decarboxylase family.

The enzyme catalyses orotidine 5'-phosphate + H(+) = UMP + CO2. The protein operates within pyrimidine metabolism; UMP biosynthesis via de novo pathway; UMP from orotate: step 2/2. This is Orotidine 5'-phosphate decarboxylase (pyrG) from Mucor circinelloides f. lusitanicus (Mucor racemosus var. lusitanicus).